A 328-amino-acid chain; its full sequence is Carbonic anhydrase, chloroplastic (328 aa).

Over residues 1–15 (MSTSSINGFSLSSLS) the composition is skewed to low complexity. The interval 1-26 (MSTSSINGFSLSSLSPAKTSTKRTTL) is disordered. Residues 1–70 (MSTSSINGFS…IITPVLREEM (70 aa)) constitute a chloroplast transit peptide.

The protein belongs to the beta-class carbonic anhydrase family. In terms of assembly, homohexamer.

The protein localises to the plastid. Its subcellular location is the chloroplast stroma. It catalyses the reaction hydrogencarbonate + H(+) = CO2 + H2O. Functionally, reversible hydration of carbon dioxide. The polypeptide is Carbonic anhydrase, chloroplastic (Pisum sativum (Garden pea)).